The sequence spans 392 residues: Phosphoglycerate kinase (392 aa).

Substrate is bound by residues 21-23 (DMN), R36, 59-62 (HLGR), R114, and R147. ATP is bound by residues K198, E320, and 346-349 (GGDT).

Belongs to the phosphoglycerate kinase family. Monomer.

It localises to the cytoplasm. The enzyme catalyses (2R)-3-phosphoglycerate + ATP = (2R)-3-phospho-glyceroyl phosphate + ADP. The protein operates within carbohydrate degradation; glycolysis; pyruvate from D-glyceraldehyde 3-phosphate: step 2/5. The protein is Phosphoglycerate kinase of Neisseria meningitidis serogroup C (strain 053442).